A 476-amino-acid chain; its full sequence is Abscisic acid 8'-hydroxylase CYP707A1 (476 aa).

Residues 5–25 (FEIFLYISMFVLGYLSYYFCF) form a helical membrane-spanning segment. Cysteine 422 provides a ligand contact to heme.

Belongs to the cytochrome P450 family. It depends on heme as a cofactor. Expressed in ovaries (specifically in ovules and placenta), sepals, petals and pedicels.

It is found in the membrane. The catalysed reaction is 2-cis-(+)-abscisate + reduced [NADPH--hemoprotein reductase] + O2 = (+)-8'-hydroxyabscisate + oxidized [NADPH--hemoprotein reductase] + H2O + H(+). It participates in plant hormone degradation; abscisic acid degradation. Functionally, involved in the oxidative degradation of abscisic acid, especially in pollinated ovaries. The chain is Abscisic acid 8'-hydroxylase CYP707A1 from Solanum lycopersicum (Tomato).